We begin with the raw amino-acid sequence, 337 residues long: MRDMEMRWAAPAPAARGRGRARRRAPDQPSFSSTLLDAICDSMDEGGEDGRTRNAASAAAKKRQEAANSYHYYYCYKPSLAASYRAAPALGSTADCPGRGYFSSSEVEYSLRRLRPIRTSAAGGAGDGAAVARKQRHEQPDVEKTAKTKPGSASARACRRPASPGARLASLLNSIFSGKRPSAQRPACSPDYPEPACSTAPPSSSSSYARRPCHAKTPRTPPTTTTTARARPSRSRTVRFLDIDGKVAVAAAVAGCRRIPVMEVEADTDDGGEESSDASSDLFELDSLAAIAPAGGRDGSYGDELPVYGTTGVGIRRDIGRRRPYGHAPCRSWSRAV.

3 disordered regions span residues methionine 1–serine 32, serine 120–serine 163, and lysine 179–serine 235. Positions histidine 137 to alanine 146 are enriched in basic and acidic residues. 2 stretches are compositionally biased toward low complexity: residues proline 150–serine 163 and proline 195–alanine 209.

This sequence belongs to the BIG GRAIN 1 (BG1) plant protein family.

The protein localises to the cell membrane. Its function is as follows. Involved in auxin transport. Regulator of the auxin signaling pathway. In Oryza sativa subsp. japonica (Rice), this protein is Protein BIG GRAIN 1-like.